The following is a 219-amino-acid chain: NAD(P)H-quinone oxidoreductase subunit I (219 aa).

2 4Fe-4S ferredoxin-type domains span residues 55 to 84 (GRIH…VDWV) and 95 to 124 (RNYS…MTEE). [4Fe-4S] cluster-binding residues include C64, C67, C70, C74, C104, C107, C110, and C114. Positions 192–219 (LKAAGSMKAAEDERESSSSASNMEESAG) are disordered. A compositionally biased stretch (low complexity) spans 208-219 (SSSASNMEESAG).

The protein belongs to the complex I 23 kDa subunit family. As to quaternary structure, NDH-1 is composed of at least 11 different subunits. [4Fe-4S] cluster serves as cofactor.

It localises to the cellular thylakoid membrane. It catalyses the reaction a plastoquinone + NADH + (n+1) H(+)(in) = a plastoquinol + NAD(+) + n H(+)(out). It carries out the reaction a plastoquinone + NADPH + (n+1) H(+)(in) = a plastoquinol + NADP(+) + n H(+)(out). NDH-1 shuttles electrons from an unknown electron donor, via FMN and iron-sulfur (Fe-S) centers, to quinones in the respiratory and/or the photosynthetic chain. The immediate electron acceptor for the enzyme in this species is believed to be plastoquinone. Couples the redox reaction to proton translocation, and thus conserves the redox energy in a proton gradient. This Synechococcus sp. (strain CC9311) protein is NAD(P)H-quinone oxidoreductase subunit I.